Consider the following 354-residue polypeptide: (R,R)-butanediol dehydrogenase (354 aa).

Residues 10-350 form the Enoyl reductase (ER) domain; sequence GDIRIEDIPE…NNESAVKIIV (341 aa). 3 residues coordinate Zn(2+): Cys-37, His-71, and Glu-157.

Belongs to the zinc-containing alcohol dehydrogenase family. Zn(2+) is required as a cofactor.

The catalysed reaction is (R,R)-butane-2,3-diol + NAD(+) = (R)-acetoin + NADH + H(+). It catalyses the reaction (S)-acetoin + NAD(+) = diacetyl + NADH + H(+). Its function is as follows. NAD-dependent butanediol dehydrogenase which catalyzes the oxidation of (R,R)-butane-2,3-diol to (3R)-acetoin and of meso-butane-2,3-diol to (3S)-acetoin. Preferentially oxidizes (R,R)-butane-2,3-diol, with a catalytic efficiency approximately fourfold higher than with meso-butane-2,3-diol. Shows a very low activity with (S,S)-butane-2,3-diol. Can also catalyze the reduction of (3R/3S)-acetoin and diacetyl in the presence of NADH. The chain is (R,R)-butanediol dehydrogenase from Neisseria gonorrhoeae (strain ATCC 700825 / FA 1090).